Reading from the N-terminus, the 566-residue chain is MTTKQWGITPPISTAPATEQENALNTALINELKNQNLFESPAESEKRVKVLDELQQITTEFVKKVSLAKHMNEKMANEAGGKIFTYGSYRLGVYGPGSDIDTLVVVPKHVSRDNFFQDLEPMLREREEVTDLAAVPDAYVPIIKFKFLGISIDLIFARLSVPRVPRDLELSDNNLLKGVEERCVLSLNGTRVTDQILQLVPNRAVFKHALRAIKFWAQRRAIYANVVGFPGGVAWAMMVARICQLYPNAVSSVIVAKFFRILHQWNWPQPILLKPIEDGPLQVRIWNPKLYPSDKAHRMPIITPAYPSMCATHNITLSTQTIILREMVRAGEIADQIMVKALPWSALFQKHDFFHRYKHYLTITAAAKTAEAQLKWAGLVESKLRHLVTRLELVDAIALAHPFNKGFDKVYNCSSEEEAQQVASGVTLEVAYESTDHEKLANDTVNEEKADNTESKADGSENGEKQIFPVYTTTCYIGLELEKKKGHPIKRLDISWPTQEFYELCKKWDKYDDTLMNVFIKNTKNTALPDEVFEPGEERPKATKKRSTADTAHSTEQLKRQKVSTA.

ATP-binding positions include Tyr86–Ser88, Asp99–Asp101, Asp153, Lys214, Tyr223, and Gly232–Val233. Residues Asp99, Asp101, and Asp153 each contribute to the Mg(2+) site. Disordered stretches follow at residues His437–Gly463 and Asp530–Ala566.

It belongs to the poly(A) polymerase family. It depends on Mg(2+) as a cofactor. Mn(2+) is required as a cofactor.

The protein localises to the nucleus. The enzyme catalyses RNA(n) + ATP = RNA(n)-3'-adenine ribonucleotide + diphosphate. Functionally, polymerase that creates the 3'-poly(A) tail of mRNA's. May acquire specificity through interaction with a cleavage and polyadenylation factor (CF I). In Schizosaccharomyces pombe (strain 972 / ATCC 24843) (Fission yeast), this protein is Poly(A) polymerase pla1 (pla1).